The primary structure comprises 255 residues: uncharacterized protein (255 aa).

N-linked (GlcNAc...) asparagine; by host glycosylation is found at N16 and N58. The next 2 helical transmembrane spans lie at 72 to 92 and 104 to 124; these read LIYSNIKWLIVGITIIPTIYY and LWYIGTPLVFMNLFNTLSHIC.

Its subcellular location is the membrane. This is an uncharacterized protein from Acanthamoeba polyphaga (Amoeba).